The chain runs to 347 residues: MKGSHPNAGSLLEPLHKLNPFSENSTSGHRKNASDHSADGETRPIAIEMKDSKGNTVPVGNSRPSKASNWLAGLMEDKNQRWRRSMEDTHICLYDFGGNQDDGFVAVYDGHAGIQASDYCQKNLHKVLLEKVRNEPDRLVTDLMDETFVEVNSKIAKATHNDICGCTAAVAFFRYEKNRTRRVLYTANAGDARIVLCRDGKAIRLSYDHKGSDANESRRVTQLGGLMVQNRINGVLAVTRALGDTYLKELVSAHPFTTETRIWNGHDEFFIIACDGLWDVVSDQEAVDFVRNFVSPREAAVRLVEFALKRLSTDNITCIVVNLTRNPGDLDDSGLTADNDSYSNDYY.

A disordered region spans residues 1–41 (MKGSHPNAGSLLEPLHKLNPFSENSTSGHRKNASDHSADGE). A compositionally biased stretch (basic and acidic residues) spans 32 to 41 (NASDHSADGE). One can recognise a PPM-type phosphatase domain in the interval 71–323 (LAGLMEDKNQ…DNITCIVVNL (253 aa)). Asp109, Gly110, Asp275, and Asp314 together coordinate Mn(2+).

Belongs to the PP2C family. As to quaternary structure, monomer. It depends on Mg(2+) as a cofactor. Mn(2+) serves as cofactor.

The enzyme catalyses O-phospho-L-seryl-[protein] + H2O = L-seryl-[protein] + phosphate. It catalyses the reaction O-phospho-L-threonyl-[protein] + H2O = L-threonyl-[protein] + phosphate. Serine and threonine phosphatase. Has a specialized role in the heat shock response. May be responsible for the dephosphorylation of hsp90. This chain is Protein phosphatase 2C homolog 1 (ptc1), found in Schizosaccharomyces pombe (strain 972 / ATCC 24843) (Fission yeast).